The following is a 391-amino-acid chain: Phosphoglycerate kinase (391 aa).

Substrate contacts are provided by residues 21–23 (DLN), Arg-36, 59–62 (HLGR), Arg-113, and Arg-146. Residues Lys-197, Glu-319, and 345–348 (GGDT) each bind ATP.

It belongs to the phosphoglycerate kinase family. In terms of assembly, monomer.

It is found in the cytoplasm. It carries out the reaction (2R)-3-phosphoglycerate + ATP = (2R)-3-phospho-glyceroyl phosphate + ADP. It participates in carbohydrate degradation; glycolysis; pyruvate from D-glyceraldehyde 3-phosphate: step 2/5. The protein is Phosphoglycerate kinase of Shewanella sp. (strain W3-18-1).